A 294-amino-acid polypeptide reads, in one-letter code: ATP synthase gamma chain (294 aa).

The protein belongs to the ATPase gamma chain family. As to quaternary structure, F-type ATPases have 2 components, CF(1) - the catalytic core - and CF(0) - the membrane proton channel. CF(1) has five subunits: alpha(3), beta(3), gamma(1), delta(1), epsilon(1). CF(0) has three main subunits: a, b and c.

It localises to the cell inner membrane. Produces ATP from ADP in the presence of a proton gradient across the membrane. The gamma chain is believed to be important in regulating ATPase activity and the flow of protons through the CF(0) complex. In Nitratiruptor sp. (strain SB155-2), this protein is ATP synthase gamma chain.